Reading from the N-terminus, the 1382-residue chain is Hepatocyte growth factor receptor (1382 aa).

Positions 1 to 24 (MKAPAVLAPGILVLLFTLVQKSYG) are cleaved as a signal peptide. Topologically, residues 25–933 (ECREALVKSE…VIVQPDQNFT (909 aa)) are extracellular. Positions 27–516 (REALVKSEMN…TGKKITKIPL (490 aa)) constitute a Sema domain. Asparagine 45 carries N-linked (GlcNAc...) asparagine glycosylation. Disulfide bonds link cysteine 95–cysteine 101, cysteine 98–cysteine 160, cysteine 133–cysteine 141, and cysteine 173–cysteine 176. An N-linked (GlcNAc...) asparagine glycan is attached at asparagine 106. Residues asparagine 203 and asparagine 359 are each glycosylated (N-linked (GlcNAc...) asparagine). 2 disulfides stabilise this stretch: cysteine 299-cysteine 364 and cysteine 386-cysteine 398. Residues asparagine 400 and asparagine 406 are each glycosylated (N-linked (GlcNAc...) asparagine). Cystine bridges form between cysteine 521–cysteine 539, cysteine 527–cysteine 562, cysteine 530–cysteine 546, and cysteine 542–cysteine 552. 3 IPT/TIG domains span residues 564–656 (PTIY…FSYV), 658–740 (PVIT…FSYQ), and 743–837 (PIVY…LIYV). O-linked (Man) threonine glycosylation occurs at threonine 583. N-linked (GlcNAc...) asparagine glycans are attached at residues asparagine 608 and asparagine 636. 2 O-linked (Man) threonine glycosylation sites follow: threonine 677 and threonine 762. N-linked (GlcNAc...) asparagine glycans are attached at residues asparagine 786, asparagine 880, and asparagine 931. A helical transmembrane segment spans residues 934–956 (GLIVGVISISIILLLLLGVFLWL). Residues 957–1382 (KKRKQIKDLG…QDNIDGEGDT (426 aa)) lie on the Cytoplasmic side of the membrane. Serine 967 bears the Phosphoserine mark. At threonine 978 the chain carries Phosphothreonine. A phosphoserine mark is found at serine 991, serine 998, and serine 1001. At tyrosine 1004 the chain carries Phosphotyrosine. The region spanning 1079-1346 (VHFNEVIGRG…RISAIFSTFI (268 aa)) is the Protein kinase domain. ATP is bound by residues 1085–1093 (IGRGHFGCV) and lysine 1111. The active-site Proton acceptor is the aspartate 1205. The interval 1213 to 1382 (LDEKFTVKVA…QDNIDGEGDT (170 aa)) is interaction with RANBP9. At tyrosine 1231 the chain carries Phosphotyrosine. 2 positions are modified to phosphotyrosine; by autocatalysis: tyrosine 1235 and tyrosine 1236. Position 1290 is a phosphothreonine (threonine 1290). An interaction with MUC20 region spans residues 1321–1360 (WHPKAELRPSFSELVSRISAIFSTFIGEHYVHVNATYVNV). Residues tyrosine 1350 and tyrosine 1357 each carry the phosphotyrosine; by autocatalysis modification. Tyrosine 1366 bears the Phosphotyrosine mark.

This sequence belongs to the protein kinase superfamily. Tyr protein kinase family. As to quaternary structure, heterodimer made of an alpha chain (50 kDa) and a beta chain (145 kDa) which are disulfide linked. Binds PLXNB1. Interacts when phosphorylated with downstream effectors including STAT3, PIK3R1, SRC, PCLG1, GRB2 and GAB1. Interacts with SPSB1, SPSB2 and SPSB4. Interacts with INPP5D/SHIP1. When phosphorylated at Tyr-1357, interacts with INPPL1/SHIP2. Interacts with RANBP9 and RANBP10, as well as SPSB1, SPSB2, SPSB3 and SPSB4. SPSB1 binding occurs in the presence and in the absence of HGF, however HGF treatment has a positive effect on this interaction. Interacts with MUC20; prevents interaction with GRB2 and suppresses hepatocyte growth factor-induced cell proliferation. Interacts with GRB10. Interacts with PTPN1 and PTPN2. Interacts with HSP90AA1 and HSP90AB1; the interaction suppresses MET kinase activity. Interacts with tensin TNS3. Interacts (when phosphorylated) with tensin TNS4 (via SH2 domain); the interaction increases MET protein stability by inhibiting MET endocytosis and subsequent lysosomal degradation. Autophosphorylated in response to ligand binding on Tyr-1235 and Tyr-1236 in the kinase domain leading to further phosphorylation of Tyr-1350 and Tyr-1357 in the C-terminal multifunctional docking site. Dephosphorylated by PTPRJ at Tyr-1350 and Tyr-1366. Dephosphorylated by PTPN1 and PTPN2. In terms of processing, ubiquitinated. Ubiquitination by CBL regulates the receptor stability and activity through proteasomal degradation. Post-translationally, O-mannosylation of IPT/TIG domains by TMEM260 is required for protein maturation. O-mannosylated residues are composed of single mannose glycans that are not elongated or modified.

It localises to the membrane. It catalyses the reaction L-tyrosyl-[protein] + ATP = O-phospho-L-tyrosyl-[protein] + ADP + H(+). In its inactive state, the C-terminal tail interacts with the catalytic domain and inhibits the kinase activity. Upon ligand binding, the C-terminal tail is displaced and becomes phosphorylated, thus increasing the kinase activity. In terms of biological role, receptor tyrosine kinase that transduces signals from the extracellular matrix into the cytoplasm by binding to hepatocyte growth factor/HGF ligand. Regulates many physiological processes including proliferation, scattering, morphogenesis and survival. Ligand binding at the cell surface induces autophosphorylation of MET on its intracellular domain that provides docking sites for downstream signaling molecules. Following activation by ligand, interacts with the PI3-kinase subunit PIK3R1, PLCG1, SRC, GRB2, STAT3 or the adapter GAB1. Recruitment of these downstream effectors by MET leads to the activation of several signaling cascades including the RAS-ERK, PI3 kinase-AKT, or PLCgamma-PKC. The RAS-ERK activation is associated with the morphogenetic effects while PI3K/AKT coordinates prosurvival effects. During embryonic development, MET signaling plays a role in gastrulation, development and migration of muscles and neuronal precursors, angiogenesis and kidney formation. In adults, participates in wound healing as well as organ regeneration and tissue remodeling. Also promotes differentiation and proliferation of hematopoietic cells. The protein is Hepatocyte growth factor receptor (MET) of Felis catus (Cat).